Consider the following 335-residue polypeptide: Glyceraldehyde-3-phosphate dehydrogenase (335 aa).

NAD(+) contacts are provided by residues 10–11 (RI), aspartate 31, arginine 75, and threonine 122. Residues 152-154 (SCT) and threonine 183 each bind D-glyceraldehyde 3-phosphate. Cysteine 153 serves as the catalytic Nucleophile. Asparagine 184 provides a ligand contact to NAD(+). D-glyceraldehyde 3-phosphate is bound by residues arginine 198, 211–212 (TG), and arginine 234. Residue asparagine 318 participates in NAD(+) binding.

It belongs to the glyceraldehyde-3-phosphate dehydrogenase family. Homotetramer.

Its subcellular location is the cytoplasm. It catalyses the reaction D-glyceraldehyde 3-phosphate + phosphate + NAD(+) = (2R)-3-phospho-glyceroyl phosphate + NADH + H(+). It functions in the pathway carbohydrate degradation; glycolysis; pyruvate from D-glyceraldehyde 3-phosphate: step 1/5. Catalyzes the oxidative phosphorylation of glyceraldehyde 3-phosphate (G3P) to 1,3-bisphosphoglycerate (BPG) using the cofactor NAD. The first reaction step involves the formation of a hemiacetal intermediate between G3P and a cysteine residue, and this hemiacetal intermediate is then oxidized to a thioester, with concomitant reduction of NAD to NADH. The reduced NADH is then exchanged with the second NAD, and the thioester is attacked by a nucleophilic inorganic phosphate to produce BPG. The sequence is that of Glyceraldehyde-3-phosphate dehydrogenase (gap) from Borreliella burgdorferi (strain ATCC 35210 / DSM 4680 / CIP 102532 / B31) (Borrelia burgdorferi).